The primary structure comprises 102 residues: Small ribosomal subunit protein uS10 (102 aa).

The protein belongs to the universal ribosomal protein uS10 family. As to quaternary structure, part of the 30S ribosomal subunit.

Its function is as follows. Involved in the binding of tRNA to the ribosomes. The sequence is that of Small ribosomal subunit protein uS10 from Streptococcus pyogenes serotype M3 (strain SSI-1).